A 627-amino-acid polypeptide reads, in one-letter code: UvrABC system protein C (627 aa).

One can recognise a GIY-YIG domain in the interval 26–105 (PEPGVYFMRD…IKQHQPYFNV (80 aa)). The UVR domain maps to 215-250 (QELIDILSEQMEKAAEALNFEVAARIRDQIAGLKSL).

This sequence belongs to the UvrC family. In terms of assembly, interacts with UvrB in an incision complex.

The protein localises to the cytoplasm. In terms of biological role, the UvrABC repair system catalyzes the recognition and processing of DNA lesions. UvrC both incises the 5' and 3' sides of the lesion. The N-terminal half is responsible for the 3' incision and the C-terminal half is responsible for the 5' incision. This Trichormus variabilis (strain ATCC 29413 / PCC 7937) (Anabaena variabilis) protein is UvrABC system protein C.